The sequence spans 287 residues: Nucleotide-binding protein Pmob_0154 (287 aa).

15 to 22 contacts ATP; the sequence is GLSGAGKT. Residue 64–67 coordinates GTP; that stretch reads DIRW.

It belongs to the RapZ-like family.

Its function is as follows. Displays ATPase and GTPase activities. The polypeptide is Nucleotide-binding protein Pmob_0154 (Petrotoga mobilis (strain DSM 10674 / SJ95)).